Here is a 636-residue protein sequence, read N- to C-terminus: MGNIFDKVNSPEDLKSLNIEDLNSLAQEVRKFIIETVADTGGHLASNLGVVELTLALHYHLNSPKDKIIWDVGHQSYTHKILTGRKKKFHTIRQYKGLSGFPKYSESIHDVIETGHSSTSISAALGLALARDLKNRNDRIYAVIGDGALTGGMAFEALNHAGHLGTDIKVVLNDNAMSISKNVGALSHYLSRIRTDPTLSKFKDDVEVLLSRIPKIGNTVSRSVERVKDGLKYLFLSGVLFEEMGFTYMGPLDGHNIQELITNFKNADNIKGPVLIHVNTKKGKGYKPAESQPSKFHGVSPFKIDNGESKRKKSNFTYSQVFGQTMVKLGNKDKKIVGITAAMPEGTGLSYFKKEFPDRFFDVGIAEQHAVTLATGMARAGMKPVVAIYSTFLQRAYDQVIHDACIQNLPVTFAIDRAGIVGADGETHHGLFDLSFLRAIPNIIIMAPKNENELQHMIYTAINNDQPVAIRYPRGEGYGVELDNDFSTIPIGKGELLCDGKDVLIIAVGSRVYPAMEAARVLSQQGIKAAVINARFIKPLDKNLILNKINECKKVITVEEHALKGGFGSAILEFINENDLRGIKVKRLGLPDRFLPHGPTGHLQTIYHIDKNAIIESALKLVDERVELGLWPGKNA.

Thiamine diphosphate is bound by residues His-74 and 115–117 (GHS). Asp-146 lines the Mg(2+) pocket. Thiamine diphosphate contacts are provided by residues 147–148 (GA), Asn-175, Tyr-286, and Glu-367. Asn-175 serves as a coordination point for Mg(2+).

This sequence belongs to the transketolase family. DXPS subfamily. Homodimer. It depends on Mg(2+) as a cofactor. Thiamine diphosphate serves as cofactor.

The enzyme catalyses D-glyceraldehyde 3-phosphate + pyruvate + H(+) = 1-deoxy-D-xylulose 5-phosphate + CO2. Its pathway is metabolic intermediate biosynthesis; 1-deoxy-D-xylulose 5-phosphate biosynthesis; 1-deoxy-D-xylulose 5-phosphate from D-glyceraldehyde 3-phosphate and pyruvate: step 1/1. In terms of biological role, catalyzes the acyloin condensation reaction between C atoms 2 and 3 of pyruvate and glyceraldehyde 3-phosphate to yield 1-deoxy-D-xylulose-5-phosphate (DXP). This is 1-deoxy-D-xylulose-5-phosphate synthase from Halothermothrix orenii (strain H 168 / OCM 544 / DSM 9562).